Here is a 183-residue protein sequence, read N- to C-terminus: Dual-action ribosomal maturation protein DarP (183 aa).

The protein belongs to the DarP family.

Its subcellular location is the cytoplasm. Its function is as follows. Member of a network of 50S ribosomal subunit biogenesis factors which assembles along the 30S-50S interface, preventing incorrect 23S rRNA structures from forming. Promotes peptidyl transferase center (PTC) maturation. The protein is Dual-action ribosomal maturation protein DarP of Klebsiella pneumoniae (strain 342).